The following is a 981-amino-acid chain: Helicase-like transcription factor CHR28 (981 aa).

2 disordered regions span residues 1-66 (MDSA…LDSR) and 112-194 (KRTH…RNSE). A compositionally biased stretch (polar residues) spans 46-65 (SGSSSGANGHTKTGLTNLDS). The span at 119–128 (FSRPPFPPRP) shows a compositional bias: pro residues. A compositionally biased stretch (polar residues) spans 166-176 (HGTSASPSHFN). A compositionally biased stretch (basic and acidic residues) spans 181–194 (PMHRNGIGEERNSE). The Helicase ATP-binding domain maps to 241–526 (ETNSLHCMGG…YSYFRFLKYD (286 aa)). ATP is bound at residue 254 to 261 (DDQGLGKT). 2 disordered regions span residues 293–337 (DADD…RKFN) and 439–462 (VVGT…SDPD). Residues 439–451 (VVGTTKKSKKKKG) are compositionally biased toward basic residues. An RING-type; degenerate zinc finger spans residues 679–718 (CCVCHDPPEDPVVTLCGHIFCYQCVSDYITGDEDTCPAPR). The segment covering 779–798 (NQGTSNSTQNGQMASSSQQP) has biased composition (polar residues). Residues 779–808 (NQGTSNSTQNGQMASSSQQPNDDDDDDDDD) form a disordered region. The segment covering 799–808 (NDDDDDDDDD) has biased composition (acidic residues). Positions 804-976 (DDDDDVTIVE…ATRLTVDDLK (173 aa)) constitute a Helicase C-terminal domain.

This sequence belongs to the SNF2/RAD54 helicase family. RAD16 subfamily. As to quaternary structure, interacts with SUVR2.

Its subcellular location is the nucleus. Functionally, probable helicase-like transcription factor involved in transcriptional gene silencing. Associates with SUVR2 and contributes to transcriptional gene silencing at RNA-directed DNA methylation (RdDM) target loci but also at RdDM-independent target loci. May be involved in nucleosome positioning to form ordered nucleosome arrays on chromatin. Associates with SUVR2 and functions redundantly with FRG1. Required for the efficient methylation of a broad range of RdDM target loci. The chain is Helicase-like transcription factor CHR28 from Arabidopsis thaliana (Mouse-ear cress).